A 315-amino-acid polypeptide reads, in one-letter code: Probable inactive acetaldehyde dehydrogenase 1 (315 aa).

NAD(+) is bound by residues 14–17 and Asn-288; that span reads SGDV.

Belongs to the acetaldehyde dehydrogenase family.

The polypeptide is Probable inactive acetaldehyde dehydrogenase 1 (Mycolicibacterium vanbaalenii (strain DSM 7251 / JCM 13017 / BCRC 16820 / KCTC 9966 / NRRL B-24157 / PYR-1) (Mycobacterium vanbaalenii)).